The chain runs to 283 residues: Thymidylate synthase (283 aa).

Residue Arg-22 coordinates dUMP. Cys-160 (nucleophile) is an active-site residue. DUMP contacts are provided by residues 180-183 (RSCD), Asn-191, and 221-223 (HIY). Asp-183 provides a ligand contact to (6R)-5,10-methylene-5,6,7,8-tetrahydrofolate. Position 282 (Ser-282) interacts with (6R)-5,10-methylene-5,6,7,8-tetrahydrofolate.

The protein belongs to the thymidylate synthase family. Bacterial-type ThyA subfamily. As to quaternary structure, homodimer.

Its subcellular location is the cytoplasm. The catalysed reaction is dUMP + (6R)-5,10-methylene-5,6,7,8-tetrahydrofolate = 7,8-dihydrofolate + dTMP. It participates in pyrimidine metabolism; dTTP biosynthesis. Its function is as follows. Catalyzes the reductive methylation of 2'-deoxyuridine-5'-monophosphate (dUMP) to 2'-deoxythymidine-5'-monophosphate (dTMP) while utilizing 5,10-methylenetetrahydrofolate (mTHF) as the methyl donor and reductant in the reaction, yielding dihydrofolate (DHF) as a by-product. This enzymatic reaction provides an intracellular de novo source of dTMP, an essential precursor for DNA biosynthesis. This Marinomonas sp. (strain MWYL1) protein is Thymidylate synthase.